The following is a 376-amino-acid chain: tRNA-specific 2-thiouridylase MnmA (376 aa).

ATP contacts are provided by residues 17–24 (GMSGGVDS) and Met-43. Residues 103–105 (NPD) form an interaction with target base in tRNA region. The active-site Nucleophile is Cys-108. A disulfide bridge connects residues Cys-108 and Cys-204. Gly-132 is an ATP binding site. Residues 154–156 (KDQ) form an interaction with tRNA region. The active-site Cysteine persulfide intermediate is Cys-204. Residues 316–317 (RY) form an interaction with tRNA region.

The protein belongs to the MnmA/TRMU family.

It localises to the cytoplasm. The catalysed reaction is S-sulfanyl-L-cysteinyl-[protein] + uridine(34) in tRNA + AH2 + ATP = 2-thiouridine(34) in tRNA + L-cysteinyl-[protein] + A + AMP + diphosphate + H(+). Its function is as follows. Catalyzes the 2-thiolation of uridine at the wobble position (U34) of tRNA, leading to the formation of s(2)U34. This chain is tRNA-specific 2-thiouridylase MnmA, found in Pseudomonas savastanoi pv. phaseolicola (strain 1448A / Race 6) (Pseudomonas syringae pv. phaseolicola (strain 1448A / Race 6)).